A 579-amino-acid chain; its full sequence is Methionine--tRNA ligase (579 aa).

Residues 14-24 (PYINGVKHLGN) carry the 'HIGH' region motif. Zn(2+) is bound by residues C146, C149, C159, and C162. The short motif at 346–350 (KFSTS) is the 'KMSKS' region element. Position 349 (T349) interacts with ATP.

It belongs to the class-I aminoacyl-tRNA synthetase family. MetG type 1 subfamily. As to quaternary structure, monomer. Requires Zn(2+) as cofactor.

It localises to the cytoplasm. It catalyses the reaction tRNA(Met) + L-methionine + ATP = L-methionyl-tRNA(Met) + AMP + diphosphate. Its function is as follows. Is required not only for elongation of protein synthesis but also for the initiation of all mRNA translation through initiator tRNA(fMet) aminoacylation. The sequence is that of Methionine--tRNA ligase from Hyphomonas neptunium (strain ATCC 15444).